The following is a 366-amino-acid chain: Phospho-N-acetylmuramoyl-pentapeptide-transferase (366 aa).

10 helical membrane passes run 27–47, 71–91, 93–113, 134–154, 174–194, 205–225, 245–265, 268–288, 294–314, and 343–363; these read AALF…INSL, TPTM…LLWA, LSNV…AIGF, LGIE…TALA, FLIN…VGAG, GLAI…AYLA, LAVV…FNAP, AIFM…TVAV, IVMA…IIQV, and QVVI…LSTL.

The protein belongs to the glycosyltransferase 4 family. MraY subfamily. Mg(2+) serves as cofactor.

The protein localises to the cell inner membrane. The enzyme catalyses UDP-N-acetyl-alpha-D-muramoyl-L-alanyl-gamma-D-glutamyl-meso-2,6-diaminopimeloyl-D-alanyl-D-alanine + di-trans,octa-cis-undecaprenyl phosphate = di-trans,octa-cis-undecaprenyl diphospho-N-acetyl-alpha-D-muramoyl-L-alanyl-D-glutamyl-meso-2,6-diaminopimeloyl-D-alanyl-D-alanine + UMP. Its pathway is cell wall biogenesis; peptidoglycan biosynthesis. Catalyzes the initial step of the lipid cycle reactions in the biosynthesis of the cell wall peptidoglycan: transfers peptidoglycan precursor phospho-MurNAc-pentapeptide from UDP-MurNAc-pentapeptide onto the lipid carrier undecaprenyl phosphate, yielding undecaprenyl-pyrophosphoryl-MurNAc-pentapeptide, known as lipid I. The protein is Phospho-N-acetylmuramoyl-pentapeptide-transferase of Rhizobium etli (strain ATCC 51251 / DSM 11541 / JCM 21823 / NBRC 15573 / CFN 42).